A 493-amino-acid chain; its full sequence is Galactose-1-phosphate uridylyltransferase (493 aa).

The protein belongs to the galactose-1-phosphate uridylyltransferase type 2 family.

The protein localises to the cytoplasm. It catalyses the reaction alpha-D-galactose 1-phosphate + UDP-alpha-D-glucose = alpha-D-glucose 1-phosphate + UDP-alpha-D-galactose. Its pathway is carbohydrate metabolism; galactose metabolism. The polypeptide is Galactose-1-phosphate uridylyltransferase (Streptococcus salivarius).